The sequence spans 287 residues: Uricase (287 aa).

Catalysis depends on charge relay system residues lysine 11 and threonine 58. Threonine 58, aspartate 59, phenylalanine 160, arginine 177, valine 219, glutamine 220, and asparagine 246 together coordinate urate. Histidine 248 serves as the catalytic Charge relay system. The Microbody targeting signal motif lies at 285-287; sequence SRL.

Belongs to the uricase family.

The protein localises to the peroxisome. It carries out the reaction urate + O2 + H2O = 5-hydroxyisourate + H2O2. The protein operates within purine metabolism; urate degradation; (S)-allantoin from urate: step 1/3. Catalyzes the oxidation of uric acid to 5-hydroxyisourate, which is further processed to form (S)-allantoin. This is Uricase (uox) from Dictyostelium discoideum (Social amoeba).